A 184-amino-acid polypeptide reads, in one-letter code: Orotate phosphoribosyltransferase (184 aa).

5-phospho-alpha-D-ribose 1-diphosphate-binding positions include R99, K100, K103, H105, and 125-133; that span reads EDTTTTGNS. Positions 129 and 157 each coordinate orotate.

It belongs to the purine/pyrimidine phosphoribosyltransferase family. PyrE subfamily. Homodimer. Mg(2+) serves as cofactor.

The enzyme catalyses orotidine 5'-phosphate + diphosphate = orotate + 5-phospho-alpha-D-ribose 1-diphosphate. It functions in the pathway pyrimidine metabolism; UMP biosynthesis via de novo pathway; UMP from orotate: step 1/2. Functionally, catalyzes the transfer of a ribosyl phosphate group from 5-phosphoribose 1-diphosphate to orotate, leading to the formation of orotidine monophosphate (OMP). This chain is Orotate phosphoribosyltransferase, found in Corynebacterium glutamicum (strain R).